Consider the following 330-residue polypeptide: Ribosomal RNA small subunit methyltransferase C (330 aa).

It belongs to the methyltransferase superfamily. RsmC family. In terms of assembly, monomer.

The protein resides in the cytoplasm. The catalysed reaction is guanosine(1207) in 16S rRNA + S-adenosyl-L-methionine = N(2)-methylguanosine(1207) in 16S rRNA + S-adenosyl-L-homocysteine + H(+). Specifically methylates the guanine in position 1207 of 16S rRNA in the 30S particle. This is Ribosomal RNA small subunit methyltransferase C from Haemophilus influenzae (strain PittEE).